The following is a 205-amino-acid chain: Small ribosomal subunit protein uS5 (205 aa).

The interval 1 to 25 is disordered; the sequence is MSGAQRGQRGGERRGGRDDRRGQGA. A compositionally biased stretch (basic and acidic residues) spans 9-24; the sequence is RGGERRGGRDDRRGQG. An S5 DRBM domain is found at 30–93; it reads YIERVVAINR…EEAKKHFFRV (64 aa).

Belongs to the universal ribosomal protein uS5 family. In terms of assembly, part of the 30S ribosomal subunit. Contacts proteins S4 and S8.

In terms of biological role, with S4 and S12 plays an important role in translational accuracy. Its function is as follows. Located at the back of the 30S subunit body where it stabilizes the conformation of the head with respect to the body. The sequence is that of Small ribosomal subunit protein uS5 from Nocardioides sp. (strain ATCC BAA-499 / JS614).